A 128-amino-acid chain; its full sequence is ATP synthase epsilon chain (128 aa).

The segment at 98–128 (EALDMPSSTPEQAQIKDAAVRRARGQLRASR) is disordered. Positions 118 to 128 (RRARGQLRASR) are enriched in basic residues.

The protein belongs to the ATPase epsilon chain family. In terms of assembly, F-type ATPases have 2 components, CF(1) - the catalytic core - and CF(0) - the membrane proton channel. CF(1) has five subunits: alpha(3), beta(3), gamma(1), delta(1), epsilon(1). CF(0) has three main subunits: a, b and c.

It is found in the cell inner membrane. Its function is as follows. Produces ATP from ADP in the presence of a proton gradient across the membrane. The sequence is that of ATP synthase epsilon chain from Rhodopirellula baltica (strain DSM 10527 / NCIMB 13988 / SH1).